The primary structure comprises 349 residues: Nicotinate-nucleotide--dimethylbenzimidazole phosphoribosyltransferase (349 aa).

Residues 1 to 20 are disordered; sequence MEFATVSPPDPGTAAAARAR. The active-site Proton acceptor is the Glu-313.

It belongs to the CobT family.

It catalyses the reaction 5,6-dimethylbenzimidazole + nicotinate beta-D-ribonucleotide = alpha-ribazole 5'-phosphate + nicotinate + H(+). It participates in nucleoside biosynthesis; alpha-ribazole biosynthesis; alpha-ribazole from 5,6-dimethylbenzimidazole: step 1/2. Its function is as follows. Catalyzes the synthesis of alpha-ribazole-5'-phosphate from nicotinate mononucleotide (NAMN) and 5,6-dimethylbenzimidazole (DMB). The polypeptide is Nicotinate-nucleotide--dimethylbenzimidazole phosphoribosyltransferase (Mycolicibacterium paratuberculosis (strain ATCC BAA-968 / K-10) (Mycobacterium paratuberculosis)).